Here is a 96-residue protein sequence, read N- to C-terminus: U-reduvitoxin-Pr12a (96 aa).

The N-terminal stretch at 1–20 is a signal peptide; that stretch reads MKTALLLFFALVFIAFETEA. 3 disulfide bridges follow: C21–C38, C33–C53, and C36–C47. 2 Pacifastin domains span residues 21–55 and 59–94; these read CRPG…ICPP and KLEC…CIHK. Positions 54–56 are pro-Pro-Arg motif necessary for proteolytic processing; that stretch reads PPR. 3 disulfides stabilise this stretch: C62/C77, C72/C91, and C75/C86.

Belongs to the protease inhibitor I19 family. As to expression, expressed by the venom gland.

Its subcellular location is the secreted. In terms of biological role, inhibits trypsin activity and prophenoloxidase (PPO) activation, an enzyme essential for both clotting and insect innate immune responses. It does not inhibit activity of chymotrypsin and protease K, and has no effect on phenoloxidase (PO) activity. This chain is U-reduvitoxin-Pr12a, found in Platymeris rhadamanthus (Red spot assassin bug).